Consider the following 382-residue polypeptide: Lipid-A-disaccharide synthase (382 aa).

Belongs to the LpxB family.

The enzyme catalyses 2-N,3-O-bis[(3R)-3-hydroxytetradecanoyl]-alpha-D-glucosaminyl 1-phosphate + UDP-2-N,3-O-bis[(3R)-3-hydroxytetradecanoyl]-alpha-D-glucosamine = lipid A disaccharide (E. coli) + UDP + H(+). It carries out the reaction a lipid X + a UDP-2-N,3-O-bis[(3R)-3-hydroxyacyl]-alpha-D-glucosamine = a lipid A disaccharide + UDP + H(+). It participates in glycolipid biosynthesis; lipid IV(A) biosynthesis; lipid IV(A) from (3R)-3-hydroxytetradecanoyl-[acyl-carrier-protein] and UDP-N-acetyl-alpha-D-glucosamine: step 5/6. Functionally, condensation of UDP-2,3-diacylglucosamine and 2,3-diacylglucosamine-1-phosphate to form lipid A disaccharide, a precursor of lipid A, a phosphorylated glycolipid that anchors the lipopolysaccharide to the outer membrane of the cell. The polypeptide is Lipid-A-disaccharide synthase (Escherichia coli O45:K1 (strain S88 / ExPEC)).